Consider the following 219-residue polypeptide: MSNNPADDEGYNEYLYKILVVGDIGTGKTSIIKRFVHNIFSMHYKSTIGVDFALKVINWDPKTEVRLQLWDIAGQERFGSMTRVYYKEAVGAMITFDVTRMSTFEAVAKWKADIDSKVTYGADEKPIPVVLLANKCDLGKDAFIKTANDMDKYCKDNGFIGWFETSAKENMNIEKAARFLVDHILKNDVRRNQPIEGTIQPGDLNKQPQPTSTGPSCCK.

22 to 29 (GDIGTGKT) lines the GTP pocket. Residues 44–52 (YKSTIGVDF) carry the Effector region motif. Residues 71–75 (DIAGQ) and 134–137 (NKCD) each bind GTP. The disordered stretch occupies residues 192–219 (NQPIEGTIQPGDLNKQPQPTSTGPSCCK). Residues 206-219 (KQPQPTSTGPSCCK) show a composition bias toward polar residues. Residues C217 and C218 are each lipidated (S-geranylgeranyl cysteine).

This sequence belongs to the small GTPase superfamily. Rab family.

The protein is Ras-related protein Rab-32A (rab32A) of Dictyostelium discoideum (Social amoeba).